We begin with the raw amino-acid sequence, 168 residues long: ATP synthase subunit b (168 aa).

A helical transmembrane segment spans residues 9-29; it reads AIPFGTIAYTLFIFLLLLVML.

Belongs to the ATPase B chain family. F-type ATPases have 2 components, F(1) - the catalytic core - and F(0) - the membrane proton channel. F(1) has five subunits: alpha(3), beta(3), gamma(1), delta(1), epsilon(1). F(0) has three main subunits: a(1), b(2) and c(10-14). The alpha and beta chains form an alternating ring which encloses part of the gamma chain. F(1) is attached to F(0) by a central stalk formed by the gamma and epsilon chains, while a peripheral stalk is formed by the delta and b chains.

It is found in the cell membrane. F(1)F(0) ATP synthase produces ATP from ADP in the presence of a proton or sodium gradient. F-type ATPases consist of two structural domains, F(1) containing the extramembraneous catalytic core and F(0) containing the membrane proton channel, linked together by a central stalk and a peripheral stalk. During catalysis, ATP synthesis in the catalytic domain of F(1) is coupled via a rotary mechanism of the central stalk subunits to proton translocation. In terms of biological role, component of the F(0) channel, it forms part of the peripheral stalk, linking F(1) to F(0). This Bacillus cereus (strain ATCC 10987 / NRS 248) protein is ATP synthase subunit b.